The chain runs to 122 residues: Large ribosomal subunit protein uL14 (122 aa).

This sequence belongs to the universal ribosomal protein uL14 family. Part of the 50S ribosomal subunit. Forms a cluster with proteins L3 and L19. In the 70S ribosome, L14 and L19 interact and together make contacts with the 16S rRNA in bridges B5 and B8.

Binds to 23S rRNA. Forms part of two intersubunit bridges in the 70S ribosome. This chain is Large ribosomal subunit protein uL14, found in Hahella chejuensis (strain KCTC 2396).